A 143-amino-acid polypeptide reads, in one-letter code: Large ribosomal subunit protein uL11 (143 aa).

This sequence belongs to the universal ribosomal protein uL11 family. As to quaternary structure, part of the ribosomal stalk of the 50S ribosomal subunit. Interacts with L10 and the large rRNA to form the base of the stalk. L10 forms an elongated spine to which L12 dimers bind in a sequential fashion forming a multimeric L10(L12)X complex. One or more lysine residues are methylated.

Its function is as follows. Forms part of the ribosomal stalk which helps the ribosome interact with GTP-bound translation factors. This is Large ribosomal subunit protein uL11 from Rhizobium etli (strain ATCC 51251 / DSM 11541 / JCM 21823 / NBRC 15573 / CFN 42).